Reading from the N-terminus, the 438-residue chain is Innexin inx7 (438 aa).

The Cytoplasmic segment spans residues 1-23; sequence MLNTFSSVRQYLKFDLTRVVIDN. Residues 24 to 44 traverse the membrane as a helical segment; it reads IVFKLHYRWTFVILLVATLLI. Residues 45–58 are Extracellular-facing; it reads TSRQYIGEHIQCLS. Residues 59-79 traverse the membrane as a helical segment; it reads DGVVSPVINTFCFFTPTFTVV. At 80–112 the chain is on the cytoplasmic side; the sequence is RDQNQTAYRPGSEPPGIGAFDPEKDTIKRHAYY. Residues 113 to 133 form a helical membrane-spanning segment; it reads QWVPFVLFFQALCFYIPHALW. Residues 134 to 283 lie on the Extracellular side of the membrane; the sequence is KSWEGGRIKA…VMALNIMNEK (150 aa). The chain crosses the membrane as a helical span at residues 284-304; it reads IYIILWFWYAFLLIVTVLGLL. The Cytoplasmic portion of the chain corresponds to 305–438; sequence WRILTLCFYR…STSDMAKLPV (134 aa). Disordered stretches follow at residues 381-402 and 415-438; these read NDVNAYREAPPTPAKNRYPELS and RRNGSPSAGGAQGPSTSDMAKLPV. The span at 418-431 shows a compositional bias: low complexity; the sequence is GSPSAGGAQGPSTS.

This sequence belongs to the pannexin family. Expressed around gut lobes in embryonic stages 15-17.

The protein localises to the cell membrane. Its subcellular location is the cell junction. The protein resides in the gap junction. Functionally, structural components of the gap junctions. The protein is Innexin inx7 (Inx7) of Drosophila melanogaster (Fruit fly).